A 123-amino-acid chain; its full sequence is UPF0102 protein PputGB1_4524 (123 aa).

It belongs to the UPF0102 family.

The chain is UPF0102 protein PputGB1_4524 from Pseudomonas putida (strain GB-1).